Here is a 148-residue protein sequence, read N- to C-terminus: Deoxyuridine 5'-triphosphate nucleotidohydrolase (148 aa).

Substrate contacts are provided by residues 67-69, N80, 84-86, and M94; these read RSG and LID.

The protein belongs to the dUTPase family. The cofactor is Mg(2+).

It catalyses the reaction dUTP + H2O = dUMP + diphosphate + H(+). The protein operates within pyrimidine metabolism; dUMP biosynthesis; dUMP from dCTP (dUTP route): step 2/2. In terms of biological role, this enzyme is involved in nucleotide metabolism: it produces dUMP, the immediate precursor of thymidine nucleotides and it decreases the intracellular concentration of dUTP so that uracil cannot be incorporated into DNA. This chain is Deoxyuridine 5'-triphosphate nucleotidohydrolase, found in Ralstonia nicotianae (strain ATCC BAA-1114 / GMI1000) (Ralstonia solanacearum).